A 586-amino-acid chain; its full sequence is ATP-dependent RNA helicase HAS1 (586 aa).

A disordered region spans residues 1 to 107 (MASDLSKKRK…GDGSLLGPSV (107 aa)). Over residues 39–60 (EDSDAERDNSSDPEIENQEPEV) the composition is skewed to acidic residues. Residues 112 to 140 (QAFSELNLSDKTMMSINEMGFTKMTEIQR) carry the Q motif motif. Positions 143-318 (IPPLLAGKDV…RISLRPGPLY (176 aa)) constitute a Helicase ATP-binding domain. Residue 156 to 163 (AKTGSGKT) participates in ATP binding. Positions 265 to 268 (DEAD) match the DEAD box motif. The Helicase C-terminal domain maps to 332–502 (GLDQGYVIVD…NVQSQLEKLI (171 aa)). The interval 557–586 (TLGAGMSRDKKPQARRAYGSQPRQSGHQRR) is disordered. The segment covering 577–586 (QPRQSGHQRR) has biased composition (polar residues).

This sequence belongs to the DEAD box helicase family. DDX18/HAS1 subfamily. In terms of assembly, associates in the nucleolus with the 60S and pre-60S ribosomal subunits.

The protein resides in the nucleus. Its subcellular location is the nucleolus. The enzyme catalyses ATP + H2O = ADP + phosphate + H(+). Functionally, ATP-dependent RNA helicase involved in 40S ribosomal subunit biogenesis. Required for the processing and cleavage of 35S pre-rRNA at sites A0, A1, and A2, leading to mature 18S rRNA. The polypeptide is ATP-dependent RNA helicase HAS1 (HAS1) (Chaetomium globosum (strain ATCC 6205 / CBS 148.51 / DSM 1962 / NBRC 6347 / NRRL 1970) (Soil fungus)).